The following is a 97-amino-acid chain: UPF0298 protein MGAS9429_Spy0329 (97 aa).

The protein belongs to the UPF0298 family.

The protein resides in the cytoplasm. This is UPF0298 protein MGAS9429_Spy0329 from Streptococcus pyogenes serotype M12 (strain MGAS9429).